A 344-amino-acid polypeptide reads, in one-letter code: MSLDLDQVVVDAQNAFASVEDNASLENEKARFLGKSGVLTDLLKGLGKLDPETRKTEGARINQAKSRVEEALTARRQALADALMNARLAAEAIDVTLPGRDVAEGSLHPVMNTWERVAKIFGSIGFDVADGPEIESDWMNFTALNNPDNHPARSMQDTFYIDGRDSEDKLLLLRTHTSPMQVRYARMHVEKYKHLDRIPPIKVIAPGRTYRVDSDATHSPMFHQVEGLWIADNISFADLKGVYTDFLRNFFERDDIQVRFRPSYFPFTEPSAEIDMAFGNGKWLEISGSGQVHPTVVRNMGLDPERYIGFAFGSGLERLTMLRYGINDLRLFFEGDVRFLRQFA.

Residue Glu269 participates in Mg(2+) binding.

The protein belongs to the class-II aminoacyl-tRNA synthetase family. Phe-tRNA synthetase alpha subunit type 1 subfamily. Tetramer of two alpha and two beta subunits. It depends on Mg(2+) as a cofactor.

It is found in the cytoplasm. It catalyses the reaction tRNA(Phe) + L-phenylalanine + ATP = L-phenylalanyl-tRNA(Phe) + AMP + diphosphate + H(+). The polypeptide is Phenylalanine--tRNA ligase alpha subunit (Ralstonia pickettii (strain 12J)).